The primary structure comprises 156 residues: rRNA methyltransferase (156 aa).

In terms of biological role, modifies 16S rRNA so making ribosomes resistant to certain aminoglycosides. The polypeptide is rRNA methyltransferase (kamC) (Saccharopolyspora hirsuta).